Here is a 438-residue protein sequence, read N- to C-terminus: Probable glycine dehydrogenase (decarboxylating) subunit 1 (438 aa).

It belongs to the GcvP family. N-terminal subunit subfamily. As to quaternary structure, the glycine cleavage system is composed of four proteins: P, T, L and H. In this organism, the P 'protein' is a heterodimer of two subunits.

The enzyme catalyses N(6)-[(R)-lipoyl]-L-lysyl-[glycine-cleavage complex H protein] + glycine + H(+) = N(6)-[(R)-S(8)-aminomethyldihydrolipoyl]-L-lysyl-[glycine-cleavage complex H protein] + CO2. In terms of biological role, the glycine cleavage system catalyzes the degradation of glycine. The P protein binds the alpha-amino group of glycine through its pyridoxal phosphate cofactor; CO(2) is released and the remaining methylamine moiety is then transferred to the lipoamide cofactor of the H protein. In Syntrophomonas wolfei subsp. wolfei (strain DSM 2245B / Goettingen), this protein is Probable glycine dehydrogenase (decarboxylating) subunit 1.